Here is a 380-residue protein sequence, read N- to C-terminus: Glutamate 5-kinase (380 aa).

Lys-15 is an ATP binding site. 3 residues coordinate substrate: Ser-59, Asp-146, and Asn-158. 178 to 179 (TD) serves as a coordination point for ATP. The region spanning 285-363 (RGSVTVDAGA…AEFERLLGYA (79 aa)) is the PUA domain.

This sequence belongs to the glutamate 5-kinase family.

It localises to the cytoplasm. The enzyme catalyses L-glutamate + ATP = L-glutamyl 5-phosphate + ADP. Its pathway is amino-acid biosynthesis; L-proline biosynthesis; L-glutamate 5-semialdehyde from L-glutamate: step 1/2. Catalyzes the transfer of a phosphate group to glutamate to form L-glutamate 5-phosphate. This chain is Glutamate 5-kinase, found in Acidovorax ebreus (strain TPSY) (Diaphorobacter sp. (strain TPSY)).